The chain runs to 332 residues: Chorismate synthase (332 aa).

Arginine 46 is a binding site for NADP(+). Residues 123–125 (HFS), glycine 253, 268–272 (KPTSS), and arginine 295 each bind FMN.

Belongs to the chorismate synthase family. As to quaternary structure, homotetramer. It depends on FMNH2 as a cofactor.

It catalyses the reaction 5-O-(1-carboxyvinyl)-3-phosphoshikimate = chorismate + phosphate. It functions in the pathway metabolic intermediate biosynthesis; chorismate biosynthesis; chorismate from D-erythrose 4-phosphate and phosphoenolpyruvate: step 7/7. In terms of biological role, catalyzes the anti-1,4-elimination of the C-3 phosphate and the C-6 proR hydrogen from 5-enolpyruvylshikimate-3-phosphate (EPSP) to yield chorismate, which is the branch point compound that serves as the starting substrate for the three terminal pathways of aromatic amino acid biosynthesis. This reaction introduces a second double bond into the aromatic ring system. This Chitinophaga pinensis (strain ATCC 43595 / DSM 2588 / LMG 13176 / NBRC 15968 / NCIMB 11800 / UQM 2034) protein is Chorismate synthase.